The primary structure comprises 200 residues: Small ribosomal subunit protein uS4 (200 aa).

A disordered region spans residues 22–42 (TGKELEKRPYAPGPHGPGQRK). The region spanning 92-155 (TRLDNLVYRL…QNLAVVKESV (64 aa)) is the S4 RNA-binding domain.

It belongs to the universal ribosomal protein uS4 family. As to quaternary structure, part of the 30S ribosomal subunit. Contacts protein S5. The interaction surface between S4 and S5 is involved in control of translational fidelity.

One of the primary rRNA binding proteins, it binds directly to 16S rRNA where it nucleates assembly of the body of the 30S subunit. Its function is as follows. With S5 and S12 plays an important role in translational accuracy. This Bacillus pumilus (strain SAFR-032) protein is Small ribosomal subunit protein uS4.